We begin with the raw amino-acid sequence, 252 residues long: Small ribosomal subunit protein uS2 (252 aa).

The protein belongs to the universal ribosomal protein uS2 family. Component of the small ribosomal subunit. Mature ribosomes consist of a small (40S) and a large (60S) subunit. The 40S subunit contains about 33 different proteins and 1 molecule of RNA (18S). The 60S subunit contains about 49 different proteins and 3 molecules of RNA (25S, 5.8S and 5S). Interacts with RPS21.

Its subcellular location is the cytoplasm. Functionally, required for the assembly and/or stability of the 40S ribosomal subunit. Required for the processing of the 20S rRNA-precursor to mature 18S rRNA in a late step of the maturation of 40S ribosomal subunits. The chain is Small ribosomal subunit protein uS2 from Encephalitozoon cuniculi (strain GB-M1) (Microsporidian parasite).